Reading from the N-terminus, the 104-residue chain is NADH-quinone oxidoreductase subunit K (104 aa).

3 helical membrane passes run 4–24, 31–51, and 67–87; these read VPAS…LFGA, VIVL…LVAF, and LFTM…LIAL.

This sequence belongs to the complex I subunit 4L family. As to quaternary structure, NDH-1 is composed of 14 different subunits. Subunits NuoA, H, J, K, L, M, N constitute the membrane sector of the complex.

It is found in the cell membrane. The catalysed reaction is a quinone + NADH + 5 H(+)(in) = a quinol + NAD(+) + 4 H(+)(out). NDH-1 shuttles electrons from NADH, via FMN and iron-sulfur (Fe-S) centers, to quinones in the respiratory chain. The immediate electron acceptor for the enzyme in this species is believed to be a menaquinone. Couples the redox reaction to proton translocation (for every two electrons transferred, four hydrogen ions are translocated across the cytoplasmic membrane), and thus conserves the redox energy in a proton gradient. The chain is NADH-quinone oxidoreductase subunit K from Bacillus mycoides (strain KBAB4) (Bacillus weihenstephanensis).